The chain runs to 415 residues: ATP-dependent RNA helicase RhlB (415 aa).

The Q motif signature appears at 9-37 (QRFSALPLHPIVRGALAKKGFDFCTPIQA). Positions 40-218 (LPISLNGRDV…FEDMNDPEYI (179 aa)) constitute a Helicase ATP-binding domain. ATP is bound at residue 53 to 60 (AQTGTGKT). The DEAD box signature appears at 164 to 167 (DEAD). The Helicase C-terminal domain occupies 241 to 389 (DKMALLLTLM…VSQYETEALL (149 aa)).

The protein belongs to the DEAD box helicase family. RhlB subfamily. As to quaternary structure, component of the RNA degradosome, which is a multiprotein complex involved in RNA processing and mRNA degradation.

The protein localises to the cytoplasm. The enzyme catalyses ATP + H2O = ADP + phosphate + H(+). Functionally, DEAD-box RNA helicase involved in RNA degradation. Has RNA-dependent ATPase activity and unwinds double-stranded RNA. The polypeptide is ATP-dependent RNA helicase RhlB (Haemophilus influenzae (strain PittGG)).